The sequence spans 112 residues: Transmembrane protein 14 homolog (112 aa).

4 helical membrane passes run 9–26 (FKLNAAMAAIVLSGGVIG), 36–53 (LIAGSVFGLLYSTSAYYL), 60–77 (VGLGVSVLASSLLGGVMG), and 87–109 (IPIILATGSAFTLLSSGKELYNI).

This sequence belongs to the TMEM14 family.

The protein resides in the membrane. This is Transmembrane protein 14 homolog from Dictyostelium discoideum (Social amoeba).